Consider the following 405-residue polypeptide: S-adenosylmethionine synthase (405 aa).

Residue Gly139–Asp144 participates in ATP binding.

Belongs to the AdoMet synthase 2 family. Requires Mg(2+) as cofactor.

The catalysed reaction is L-methionine + ATP + H2O = S-adenosyl-L-methionine + phosphate + diphosphate. The protein operates within amino-acid biosynthesis; S-adenosyl-L-methionine biosynthesis; S-adenosyl-L-methionine from L-methionine: step 1/1. Catalyzes the formation of S-adenosylmethionine from methionine and ATP. The sequence is that of S-adenosylmethionine synthase from Thermococcus onnurineus (strain NA1).